We begin with the raw amino-acid sequence, 300 residues long: MTKQRVCPVCGSTEFIYDPERGEIVCARCGYVIEENIVDMGPEWRAFDASQREKRSRTGAPESILLHDKGLSTDIGIDRSLTGLMREKMYRLRKWQSRLRVSDAAERNLAFALSELDRITAQLKLPKHVEEEAARLYREAVRKGLIRGRSIESVIAACVYAACRLLKVPRTLDEISDIARVEKKEIGRSYRFIARNLNLTPKKLFVKPTDYVNKFADELGLSEKVRRRAIEILEEAYKRGLTSGKSPAGLVAAALYIASLLEGEKRTQREVAEVARVTEVTVRNRYKELVEKLGIKVPVT.

Residues 3-34 (KQRVCPVCGSTEFIYDPERGEIVCARCGYVIE) form a TFIIB-type zinc finger. Residues cysteine 7, cysteine 10, cysteine 26, and cysteine 29 each contribute to the Zn(2+) site. 2 tandem repeats follow at residues 114-197 (SELD…ARNL) and 210-291 (DYVN…ELVE).

It belongs to the TFIIB family.

Its function is as follows. Stabilizes TBP binding to an archaeal box-A promoter. Also responsible for recruiting RNA polymerase II to the pre-initiation complex (DNA-TBP-TFIIB). The sequence is that of Transcription initiation factor IIB from Pyrococcus abyssi (strain GE5 / Orsay).